The primary structure comprises 161 residues: Endoribonuclease YbeY (161 aa).

Residues H121, H125, and H131 each coordinate Zn(2+).

The protein belongs to the endoribonuclease YbeY family. Zn(2+) is required as a cofactor.

It is found in the cytoplasm. Single strand-specific metallo-endoribonuclease involved in late-stage 70S ribosome quality control and in maturation of the 3' terminus of the 16S rRNA. The polypeptide is Endoribonuclease YbeY (Xanthomonas axonopodis pv. citri (strain 306)).